Reading from the N-terminus, the 367-residue chain is Phospho-N-acetylmuramoyl-pentapeptide-transferase (367 aa).

10 helical membrane-spanning segments follow: residues A30 to L50, L71 to A91, T94 to I114, I138 to M158, L169 to S189, G200 to A220, G237 to F257, I264 to L284, L289 to V309, and K344 to L364.

It belongs to the glycosyltransferase 4 family. MraY subfamily. Mg(2+) is required as a cofactor.

The protein resides in the cell inner membrane. It carries out the reaction UDP-N-acetyl-alpha-D-muramoyl-L-alanyl-gamma-D-glutamyl-meso-2,6-diaminopimeloyl-D-alanyl-D-alanine + di-trans,octa-cis-undecaprenyl phosphate = di-trans,octa-cis-undecaprenyl diphospho-N-acetyl-alpha-D-muramoyl-L-alanyl-D-glutamyl-meso-2,6-diaminopimeloyl-D-alanyl-D-alanine + UMP. Its pathway is cell wall biogenesis; peptidoglycan biosynthesis. Its function is as follows. Catalyzes the initial step of the lipid cycle reactions in the biosynthesis of the cell wall peptidoglycan: transfers peptidoglycan precursor phospho-MurNAc-pentapeptide from UDP-MurNAc-pentapeptide onto the lipid carrier undecaprenyl phosphate, yielding undecaprenyl-pyrophosphoryl-MurNAc-pentapeptide, known as lipid I. This is Phospho-N-acetylmuramoyl-pentapeptide-transferase from Chlorobium phaeovibrioides (strain DSM 265 / 1930) (Prosthecochloris vibrioformis (strain DSM 265)).